Here is a 178-residue protein sequence, read N- to C-terminus: MEQFHGTTIVSVRRGDKVALGGDGQVTLGNIVMKGGARKVRRIYNNQVLVGFAGGTADAFSLLDRFEAKLEKHQGNLTRAAVELAKDWRTDRMLRRLEAMLITADATTTLVITGNGDVLDPEGGICAIGSGGAYAQAAARALAENTDMSPREIVEKSLEIAGDMCIYTNHNRIIETIE.

The active site involves Thr7. Positions 162, 165, and 168 each coordinate Na(+).

Belongs to the peptidase T1B family. HslV subfamily. As to quaternary structure, a double ring-shaped homohexamer of HslV is capped on each side by a ring-shaped HslU homohexamer. The assembly of the HslU/HslV complex is dependent on binding of ATP.

Its subcellular location is the cytoplasm. The enzyme catalyses ATP-dependent cleavage of peptide bonds with broad specificity.. With respect to regulation, allosterically activated by HslU binding. In terms of biological role, protease subunit of a proteasome-like degradation complex believed to be a general protein degrading machinery. The protein is ATP-dependent protease subunit HslV of Burkholderia vietnamiensis (strain G4 / LMG 22486) (Burkholderia cepacia (strain R1808)).